A 224-amino-acid chain; its full sequence is Peroxiredoxin-6 (224 aa).

Positions 5-169 (LLLGDEAPNF…ILRVVDSLQL (165 aa)) constitute a Thioredoxin domain. The required and sufficient for targeting to lysosomes and lamellar bodies stretch occupies residues 31-40 (DSWGILFSHP). At Thr44 the chain carries Phosphothreonine. Cys47 functions as the Cysteine sulfenic acid (-SOH) intermediate; for peroxidase activity in the catalytic mechanism. Lys63 is modified (N6-acetyllysine). Residue Tyr89 is modified to Phosphotyrosine. Catalysis depends on Asp140, which acts as the For phospholipase activity. A Phosphothreonine; by MAPK modification is found at Thr177. Residue Lys209 is modified to N6-acetyllysine; alternate. At Lys209 the chain carries N6-succinyllysine; alternate.

It belongs to the peroxiredoxin family. Prx6 subfamily. Homodimer. Interacts with GSTP1; mediates PRDX6 glutathionylation and regeneration. Interacts with APEX1. Interacts with STH. May interact with FAM168B. May interact with HTR2A. In terms of processing, phosphorylation at Thr-177 by MAP kinases increases the phospholipase activity of the enzyme. Phosphorylated form exhibits a greater lysophosphatidylcholine acyltransferase activity compared to the non-phosphorylated form. Post-translationally, irreversibly inactivated by overoxidation of Cys-47 to sulfinic acid (Cys-SO(2)H) and sulfonic acid (Cys-SO(3)H) forms upon oxidative stress.

Its subcellular location is the cytoplasm. The protein resides in the lysosome. The enzyme catalyses a hydroperoxide + 2 glutathione = an alcohol + glutathione disulfide + H2O. It catalyses the reaction a 1,2-diacyl-sn-glycero-3-phosphocholine + H2O = a 1-acyl-sn-glycero-3-phosphocholine + a fatty acid + H(+). The catalysed reaction is a 1-acyl-sn-glycero-3-phosphocholine + an acyl-CoA = a 1,2-diacyl-sn-glycero-3-phosphocholine + CoA. It carries out the reaction 1-hexadecanoyl-sn-glycero-3-phosphocholine + hexadecanoyl-CoA = 1,2-dihexadecanoyl-sn-glycero-3-phosphocholine + CoA. The enzyme catalyses 1,2-dihexadecanoyl-sn-glycero-3-phosphocholine + H2O = 1-hexadecanoyl-sn-glycero-3-phosphocholine + hexadecanoate + H(+). Functionally, thiol-specific peroxidase that catalyzes the reduction of hydrogen peroxide and organic hydroperoxides to water and alcohols, respectively. Can reduce H(2)O(2) and short chain organic, fatty acid, and phospholipid hydroperoxides. Also has phospholipase activity, can therefore either reduce the oxidized sn-2 fatty acyl group of phospholipids (peroxidase activity) or hydrolyze the sn-2 ester bond of phospholipids (phospholipase activity). These activities are dependent on binding to phospholipids at acidic pH and to oxidized phospholipds at cytosolic pH. Plays a role in cell protection against oxidative stress by detoxifying peroxides and in phospholipid homeostasis. Exhibits acyl-CoA-dependent lysophospholipid acyltransferase which mediates the conversion of lysophosphatidylcholine (1-acyl-sn-glycero-3-phosphocholine or LPC) into phosphatidylcholine (1,2-diacyl-sn-glycero-3-phosphocholine or PC). Shows a clear preference for LPC as the lysophospholipid and for palmitoyl CoA as the fatty acyl substrate. This chain is Peroxiredoxin-6 (Prdx6), found in Rattus norvegicus (Rat).